The sequence spans 399 residues: Elongation factor Tu (399 aa).

Residues 10–209 (KPHVNIGTIG…AVDEYIPTPE (200 aa)) form the tr-type G domain. The tract at residues 19–26 (GHVDHGKT) is G1. 19–26 (GHVDHGKT) contributes to the GTP binding site. Position 26 (Thr26) interacts with Mg(2+). Residues 60 to 64 (GITIN) form a G2 region. The G3 stretch occupies residues 81–84 (DCPG). GTP contacts are provided by residues 81–85 (DCPGH) and 136–139 (NKMD). Positions 136–139 (NKMD) are G4. The segment at 174 to 176 (SAL) is G5.

The protein belongs to the TRAFAC class translation factor GTPase superfamily. Classic translation factor GTPase family. EF-Tu/EF-1A subfamily. As to quaternary structure, monomer.

It localises to the cytoplasm. The enzyme catalyses GTP + H2O = GDP + phosphate + H(+). GTP hydrolase that promotes the GTP-dependent binding of aminoacyl-tRNA to the A-site of ribosomes during protein biosynthesis. In Nautilia profundicola (strain ATCC BAA-1463 / DSM 18972 / AmH), this protein is Elongation factor Tu.